Reading from the N-terminus, the 131-residue chain is Large ribosomal subunit protein bL17 (131 aa).

This sequence belongs to the bacterial ribosomal protein bL17 family. In terms of assembly, part of the 50S ribosomal subunit. Contacts protein L32.

This Methylibium petroleiphilum (strain ATCC BAA-1232 / LMG 22953 / PM1) protein is Large ribosomal subunit protein bL17.